The sequence spans 149 residues: Large ribosomal subunit protein bL20m (149 aa).

The N-terminal 9 residues, 1–9, are a transit peptide targeting the mitochondrion; sequence MVFLSLSRW.

It belongs to the bacterial ribosomal protein bL20 family. In terms of assembly, component of the mitochondrial ribosome large subunit (39S) which comprises a 16S rRNA and about 50 distinct proteins.

Its subcellular location is the mitochondrion. The sequence is that of Large ribosomal subunit protein bL20m (mrpl20) from Xenopus laevis (African clawed frog).